A 254-amino-acid polypeptide reads, in one-letter code: Trypsin (254 aa).

The N-terminal stretch at 1-16 is a signal peptide; that stretch reads MLRFIAVFALVNCALA. Positions 17 to 26 are cleaved as a propeptide — activation peptide; that stretch reads GTLPNDLDGR. The 226-residue stretch at 27-252 folds into the Peptidase S1 domain; it reads IVNGVDTTIE…VRSWIEKTAK (226 aa). An intrachain disulfide couples Cys-53 to Cys-69. Catalysis depends on charge relay system residues His-68 and Asp-113. 3 disulfide bridges follow: Cys-154/Cys-158, Cys-178/Cys-195, and Cys-204/Cys-228. The active-site Charge relay system is Ser-208.

It belongs to the peptidase S1 family.

Its subcellular location is the secreted. It localises to the extracellular space. It catalyses the reaction Preferential cleavage: Arg-|-Xaa, Lys-|-Xaa.. In terms of biological role, involved in digestion of a protein meal. The polypeptide is Trypsin (Sarcophaga bullata (Grey flesh fly)).